Reading from the N-terminus, the 222-residue chain is Protein GrpE (222 aa).

The disordered stretch occupies residues 1 to 64 (MSDQNLGQGS…GEEILSDDDL (64 aa)). A compositionally biased stretch (basic and acidic residues) spans 16 to 44 (EEPIVRDKRRIDPETGKVREPQDLSHEEL). Residues 54–64 (QGEEILSDDDL) show a composition bias toward acidic residues.

Belongs to the GrpE family. In terms of assembly, homodimer.

The protein resides in the cytoplasm. Its function is as follows. Participates actively in the response to hyperosmotic and heat shock by preventing the aggregation of stress-denatured proteins, in association with DnaK and GrpE. It is the nucleotide exchange factor for DnaK and may function as a thermosensor. Unfolded proteins bind initially to DnaJ; upon interaction with the DnaJ-bound protein, DnaK hydrolyzes its bound ATP, resulting in the formation of a stable complex. GrpE releases ADP from DnaK; ATP binding to DnaK triggers the release of the substrate protein, thus completing the reaction cycle. Several rounds of ATP-dependent interactions between DnaJ, DnaK and GrpE are required for fully efficient folding. This is Protein GrpE from Leifsonia xyli subsp. xyli (strain CTCB07).